Here is a 932-residue protein sequence, read N- to C-terminus: UPF0182 protein Dred_1797 (932 aa).

7 helical membrane-spanning segments follow: residues 11–31 (LVIL…GLYI), 53–73 (IGLR…NLML), 118–138 (LTLA…SSVA), 180–200 (ILAS…LVTD), 209–229 (IFRF…FFVI), 264–284 (YKAL…NIFL), and 292–312 (YAIG…PAII). Residues 861-883 (DRPQQGVPPATDQPAGQQPAPEK) form a disordered region.

This sequence belongs to the UPF0182 family.

The protein resides in the cell membrane. This chain is UPF0182 protein Dred_1797, found in Desulforamulus reducens (strain ATCC BAA-1160 / DSM 100696 / MI-1) (Desulfotomaculum reducens).